Here is a 320-residue protein sequence, read N- to C-terminus: MPDPMRSYLDFEKPVAELDSKIDELRALAASGSDIGEEISSIGDKAAQALKDLYANLTPWQKTQVARHPQRPHFSDFIKGLITEFTPLAGDRKFGEDEALIGGFGRFRGESICVIGQEKGATTESRLKHNFGMARPEGYRKAVRLMDMADRFDIPVLSLVDSAGAYPGIGAEERGQAEAIARSTDTCLSLGVANVAVIIGEGGSGGAIAIATASRVLMLEHAIYSVISPEAASSILWRDSSKAQEAATNMKITAQDLLRFGVIDAILKEPPGGAHRDPAATVALTGDAIAEAFNDLRNLDRDTLRKQRRQKFLDIGRKLG.

Residues 42-295 (IGDKAAQALK…GDAIAEAFND (254 aa)) enclose the CoA carboxyltransferase C-terminal domain.

It belongs to the AccA family. As to quaternary structure, acetyl-CoA carboxylase is a heterohexamer composed of biotin carboxyl carrier protein (AccB), biotin carboxylase (AccC) and two subunits each of ACCase subunit alpha (AccA) and ACCase subunit beta (AccD).

It is found in the cytoplasm. The catalysed reaction is N(6)-carboxybiotinyl-L-lysyl-[protein] + acetyl-CoA = N(6)-biotinyl-L-lysyl-[protein] + malonyl-CoA. It functions in the pathway lipid metabolism; malonyl-CoA biosynthesis; malonyl-CoA from acetyl-CoA: step 1/1. Its function is as follows. Component of the acetyl coenzyme A carboxylase (ACC) complex. First, biotin carboxylase catalyzes the carboxylation of biotin on its carrier protein (BCCP) and then the CO(2) group is transferred by the carboxyltransferase to acetyl-CoA to form malonyl-CoA. The protein is Acetyl-coenzyme A carboxylase carboxyl transferase subunit alpha of Nitrobacter hamburgensis (strain DSM 10229 / NCIMB 13809 / X14).